A 490-amino-acid chain; its full sequence is Secretory immunoglobulin A-binding protein EsiB (490 aa).

The signal sequence occupies residues Met-1–Gly-23. Sel1-like repeat units lie at residues Ala-39–Tyr-74, Ala-77–Gly-109, Pro-111–Gly-145, Met-153–Asn-182, Ser-185–Asp-218, Gln-222–Asn-254, Ile-256–Asn-290, Ser-291–Asp-327, Ala-328–Gly-361, Ala-364–Gly-397, and Ser-399–Ser-430. 3 residues coordinate Mg(2+): His-122, Glu-159, and Asp-161.

In terms of assembly, interacts with human secreted IgA (SIgA) at least via resides 244-260. The cofactor is Mg(2+).

The protein resides in the cell surface. Its function is as follows. Upon host (human neutrophil) infection interferes with productive FCAR signaling, inhibiting secreted IgA (SIgA) effector functions and probably avoiding neutrophil activation. Inhibits the SIgA-mediated oxidative burst by neutrophils, decreases generation of ROS (reactive oxygen species) by neutrophils and reduces chemotaxis by neutrophils, all of which are SIgA effector functions used to stimulate the immune response. Does not block SIgA-binding to its receptor (FCAR) on neutrophils, but it decreases SIgA-stimulated phosphorylation of cytoplasmic proteins, including phospholipase C-gamma and MAP kinases, all actions that may be advantageous to the pathogen. The sequence is that of Secretory immunoglobulin A-binding protein EsiB from Escherichia coli O6:H1 (strain CFT073 / ATCC 700928 / UPEC).